The primary structure comprises 76 residues: Putative snRNP Sm-like protein (76 aa).

A Sm domain is found at 4–76; it reads RPLDVIHKSL…VLAISPVEIE (73 aa).

It belongs to the snRNP Sm proteins family.

In Thermococcus sibiricus (strain DSM 12597 / MM 739), this protein is Putative snRNP Sm-like protein.